The sequence spans 31 residues: Cytochrome b6-f complex subunit 6 (31 aa).

The chain crosses the membrane as a helical span at residues 4–26 (IVSYFGFLLTASTITPALFIGLS).

It belongs to the PetL family. In terms of assembly, the 4 large subunits of the cytochrome b6-f complex are cytochrome b6, subunit IV (17 kDa polypeptide, PetD), cytochrome f and the Rieske protein, while the 4 small subunits are PetG, PetL, PetM and PetN. The complex functions as a dimer.

The protein resides in the plastid. It localises to the chloroplast thylakoid membrane. Component of the cytochrome b6-f complex, which mediates electron transfer between photosystem II (PSII) and photosystem I (PSI), cyclic electron flow around PSI, and state transitions. PetL is important for photoautotrophic growth as well as for electron transfer efficiency and stability of the cytochrome b6-f complex. This is Cytochrome b6-f complex subunit 6 from Nymphaea alba (White water-lily).